Consider the following 432-residue polypeptide: C2H2 type master regulator of conidiophore development brlA (432 aa).

Disordered regions lie at residues 22–72 (SNEC…RTPG) and 238–260 (KQHSPTTPIRSCSLGTGSGADTP). Positions 29–44 (TSSFSPLESPTPTPTS) are enriched in low complexity. Composition is skewed to polar residues over residues 62–72 (LPNNTYERTPG) and 238–252 (KQHSPTTPIRSCSLG). 2 consecutive C2H2-type zinc fingers follow at residues 320-344 (FKCKEPGCNGRFKRQEHLKRHMKSH) and 350-375 (HVCWVPGCHRAFSRSDNLNAHYTKTH). Positions 388 to 432 (LDENSPDYDPEFRGQLTPDGRPIYGSKLDDPIPGAGDMSLDGWDE) are disordered.

Its subcellular location is the nucleus. Functionally, brlA, abaA and wetA are pivotal regulators of conidiophore development and conidium maturation. They act individually and together to regulate their own expression and that of numerous other sporulation-specific genes. Binds promoters of target genes at brlA response elements (BREs) containing the conserved sequence 5'-(C/A)(A/G)AGGG(G/A)-3'. Controls the expression of the conidiophore-specific phenol oxidase ivoB. Controls the expression of the hydrophobin rodA. Mediates the developmental switch from the indeterminate, apical growth pattern of vegetative cells to the budding growth pattern of conidiophores. Expression of brlA leads to activation of abaA, wetA and stuA, cessation of vegetative growth, cellular vacuolization and spore formation. The sequence is that of C2H2 type master regulator of conidiophore development brlA from Emericella nidulans (strain FGSC A4 / ATCC 38163 / CBS 112.46 / NRRL 194 / M139) (Aspergillus nidulans).